The following is a 224-amino-acid chain: MNSDLALLRLLQLASPGLPVGGFTYSQGLEWAVEAGWVRGVDSFAGWQREQVHDTLACLDWPVLARLYHACQAKDAEAFGHWSRFLLANRETAELRLEEQQRGAALARLLDGWQLGQAPAWRASLELTQLGGMAWLAAHWAIPLRQLALGHGFAWLEGAVMAGVKLVPFGQQAAQTLLRDLGADLPAALDQALALGDDQLGGGLPLLAIASSRHETQYTRLFRS.

This sequence belongs to the UreF family. In terms of assembly, ureD, UreF and UreG form a complex that acts as a GTP-hydrolysis-dependent molecular chaperone, activating the urease apoprotein by helping to assemble the nickel containing metallocenter of UreC. The UreE protein probably delivers the nickel.

It is found in the cytoplasm. In terms of biological role, required for maturation of urease via the functional incorporation of the urease nickel metallocenter. In Pseudomonas putida (strain ATCC 47054 / DSM 6125 / CFBP 8728 / NCIMB 11950 / KT2440), this protein is Urease accessory protein UreF.